Consider the following 150-residue polypeptide: Large ribosomal subunit protein bL9 (150 aa).

Belongs to the bacterial ribosomal protein bL9 family.

Binds to the 23S rRNA. The polypeptide is Large ribosomal subunit protein bL9 (Clavibacter sepedonicus (Clavibacter michiganensis subsp. sepedonicus)).